Here is a 150-residue protein sequence, read N- to C-terminus: Cytochrome b5 type B (150 aa).

Residues 1–15 constitute a propeptide that is removed on maturation; sequence MSGSMATAEASGSDG. The interval 1–21 is disordered; that stretch reads MSGSMATAEASGSDGKGQEVE. Position 23 is a phosphoserine (serine 23). A Cytochrome b5 heme-binding domain is found at 24 to 100; sequence VTYYRMEEVA…LKQYYIGDIH (77 aa). N6-acetyllysine is present on lysine 34. Phosphoserine is present on serine 37. Lysine 39 is modified (N6-methyllysine). Heme-binding residues include histidine 59 and histidine 83. Residue serine 84 is modified to Phosphoserine. Residues 122–144 form a helical membrane-spanning segment; it reads CWAYWILPIIGAVLLGFLYRYYT.

The protein belongs to the cytochrome b5 family. Component of a complex composed of cytochrome b5, NADH-cytochrome b5 reductase (CYB5R3) and MTARC2.

The protein resides in the mitochondrion outer membrane. In terms of biological role, cytochrome b5 is a membrane-bound hemoprotein functioning as an electron carrier for several membrane-bound oxygenases. In Pongo abelii (Sumatran orangutan), this protein is Cytochrome b5 type B (CYB5B).